A 3130-amino-acid chain; its full sequence is Reticulocyte-binding protein homolog 2a (3130 aa).

Positions 1 to 24 are cleaved as a signal peptide; that stretch reads MKTTLFCSISFCNIIFFFLELSHE. Topologically, residues 25-3066 are extracellular; sequence HFVGQSSNTH…FSRSKNLSVA (3042 aa). N-linked (GlcNAc...) asparagine glycosylation is found at Asn43, Asn105, Asn123, and Asn159. LRR repeat units follow at residues 182–206, 300–323, and 419–443; these read FTTS…EKFN, VMNN…LYLN, and ISKL…IFNI. The interval 446–557 is erythrocyte binding domain (EBD); sequence KKYETYVDMK…SLNNYIEKTD (112 aa). Residues 490–517 adopt a coiled-coil conformation; sequence KANLDSEVVKLQIKINEKSNELDNAISQ. N-linked (GlcNAc...) asparagine glycans are attached at residues Asn575, Asn579, Asn635, Asn675, Asn724, and Asn745. One copy of the LRR 4 repeat lies at 659–683; sequence LNSLNLININDFINEKNISQEKVSY. An LRR 5 repeat occupies 757 to 778; that stretch reads LSHLLSLKENIIKKLLNHIEQN. An N-linked (GlcNAc...) asparagine glycan is attached at Asn781. Residues 801-824 form an LRR 6 repeat; that stretch reads KEEIESLEVYKHTIGNIQKEYILH. 2 N-linked (GlcNAc...) asparagine glycosylation sites follow: Asn837 and Asn994. The stretch at 1116-1139 is one LRR 7 repeat; that stretch reads LTKLKSIHFNIDKEKYKNPKSQEN. N-linked (GlcNAc...) asparagine glycosylation is present at Asn1166. Residues 1173 to 1185 show a composition bias toward basic and acidic residues; it reads VNADNEKKKQKEK. Positions 1173–1195 are disordered; it reads VNADNEKKKQKEKEEDDEQTHYS. The LRR 8 repeat unit spans residues 1305-1328; it reads FDKLKDLYENINKLTNESNGLKSD. N-linked (GlcNAc...) asparagine glycosylation is found at Asn1320 and Asn1332. The LRR 9 repeat unit spans residues 1336 to 1362; it reads VDKLKEINLQVFSNLGNIIKYVEKLEN. Residues Asn1398 and Asn1409 are each glycosylated (N-linked (GlcNAc...) asparagine). One copy of the LRR 10 repeat lies at 1438-1461; that stretch reads DDNIKSLVLKKEEISEKRKQVNKY. The N-linked (GlcNAc...) asparagine glycan is linked to Asn1513. LRR repeat units follow at residues 1536–1561 and 1628–1652; these read IIKI…KYEK and SNLL…DYMN. 3 N-linked (GlcNAc...) asparagine glycosylation sites follow: Asn1705, Asn1742, and Asn1785. LRR repeat units follow at residues 1795-1818 and 1890-1913; these read MTEI…AQTE and LDSL…TNKE. Residues 1805–1842 adopt a coiled-coil conformation; the sequence is YNEIKEIKEVAQTEYDKLNKKVDELKNYLNNIKEQEGH. N-linked (GlcNAc...) asparagine glycans are attached at residues Asn1900, Asn1927, and Asn1971. LRR repeat units lie at residues 2014–2041 and 2052–2076; these read IQKL…LYDL and ENDI…QYNF. An N-linked (GlcNAc...) asparagine glycan is attached at Asn2113. Residues 2126 to 2152 form an LRR 17 repeat; the sequence is LDELEKSLTLSSNEMEIKTIVQNSYNS. N-linked (GlcNAc...) asparagine glycans are attached at residues Asn2212, Asn2268, Asn2346, Asn2421, Asn2456, Asn2473, Asn2484, Asn2537, and Asn2550. LRR repeat units follow at residues 2345 to 2368 and 2409 to 2434; these read INET…INDK and NVEL…TFIK. An LRR 20 repeat occupies 2522–2545; the sequence is LFQMEEMLLNINNIMNETKRISNT. LRR repeat units lie at residues 2572-2599 and 2650-2671; these read IDKL…AKRK and LNEL…KLIL. Positions 2661 to 2874 form a coiled coil; the sequence is IKDLGDEKLI…KIELAEREQH (214 aa). The tract at residues 2680–2753 is disordered; that stretch reads RERLEKAKQE…QERLQKEEEL (74 aa). LRR repeat units lie at residues 2915–2936 and 2937–2959; these read LKHL…NDEV and IKDN…LYLN. N-linked (GlcNAc...) asparagine glycans are attached at residues Asn2940, Asn2986, and Asn3015. Positions 3021–3056 are disordered; it reads ITSKEKKDETESTKRSGTDHTNSSESTTDDNTNDRN. The segment covering 3023–3038 has biased composition (basic and acidic residues); sequence SKEKKDETESTKRSGT. Over residues 3039–3050 the composition is skewed to low complexity; the sequence is DHTNSSESTTDD. Asn3042, Asn3056, and Asn3062 each carry an N-linked (GlcNAc...) asparagine glycan. The helical transmembrane segment at 3067–3087 threads the bilayer; it reads IYTAGSVALCVLIFSSIGLLL. Residues 3088–3130 lie on the Cytoplasmic side of the membrane; sequence IKTNSGDNNSNEINEAFEPNDDVLFKEKDEIIEITFNDNDSTI.

Forms a heterodimer composed of the 285 kDa and the 85 kDa forms. Proteolytically processed into multiple fragments following schizont rupture. In the mature schizont stage prior to merozoite release, full length RH2b is processed post-Golgi into C-terminal 285 kDa and N-terminal 85 kDa forms. During merozoite invasion of host erythrocytes, further processing occurs generating a 140 kDa C-terminal form. At the same time, the C-terminal transmembrane region is probably cleaved, probably by a rhomboid protease, to shed all the different processed protein forms from the membrane leaving a transmembrane 7 kDa form on the merozoite surface.

The protein localises to the cell membrane. It is found in the cytoplasmic vesicle. Its subcellular location is the secretory vesicle. It localises to the rhoptry. The protein resides in the secreted. The protein localises to the cell junction. It is found in the tight junction. In terms of biological role, during the asexual blood stage, binds to a chymotrypsin sensitive, neuraminidase and trypsin resistant receptor on the surface of the host erythrocyte. Despite its binding capacity, appears to be dispensable for merozoite invasion of host erythrocytes. Functionally, during the asexual blood stage, binds to a trypsin-resistant and chymotrypsin and neuraminidase sensitive receptor on the surface of the host erythrocyte. This chain is Reticulocyte-binding protein homolog 2a, found in Plasmodium falciparum (isolate 3D7).